Here is a 345-residue protein sequence, read N- to C-terminus: L-threonine 3-dehydrogenase (345 aa).

Cysteine 42 contacts Zn(2+). Active-site charge relay system residues include threonine 44 and histidine 47. Residues histidine 67, glutamate 68, cysteine 97, cysteine 100, cysteine 103, and cysteine 111 each contribute to the Zn(2+) site. NAD(+) is bound by residues isoleucine 179, aspartate 199, arginine 204, 266–268 (LGI), and 290–291 (IY).

It belongs to the zinc-containing alcohol dehydrogenase family. In terms of assembly, homotetramer. Zn(2+) is required as a cofactor.

The protein resides in the cytoplasm. The enzyme catalyses L-threonine + NAD(+) = (2S)-2-amino-3-oxobutanoate + NADH + H(+). Its pathway is amino-acid degradation; L-threonine degradation via oxydo-reductase pathway; glycine from L-threonine: step 1/2. Catalyzes the NAD(+)-dependent oxidation of L-threonine to 2-amino-3-ketobutyrate. The polypeptide is L-threonine 3-dehydrogenase (Sinorhizobium fredii (strain NBRC 101917 / NGR234)).